A 120-amino-acid chain; its full sequence is UPF0231 protein NT01EI_0766 (120 aa).

This sequence belongs to the UPF0231 family.

The protein is UPF0231 protein NT01EI_0766 of Edwardsiella ictaluri (strain 93-146).